Consider the following 225-residue polypeptide: Phosphoglycolate phosphatase (225 aa).

Residue Asp-11 is the Nucleophile of the active site. The Mg(2+) site is built by Asp-11, Asp-13, and Asp-174.

The protein belongs to the HAD-like hydrolase superfamily. CbbY/CbbZ/Gph/YieH family. Mg(2+) is required as a cofactor.

The enzyme catalyses 2-phosphoglycolate + H2O = glycolate + phosphate. It participates in organic acid metabolism; glycolate biosynthesis; glycolate from 2-phosphoglycolate: step 1/1. Its function is as follows. Specifically catalyzes the dephosphorylation of 2-phosphoglycolate. Is involved in the dissimilation of the intracellular 2-phosphoglycolate formed during the DNA repair of 3'-phosphoglycolate ends, a major class of DNA lesions induced by oxidative stress. The sequence is that of Phosphoglycolate phosphatase from Nitrosococcus oceani (strain ATCC 19707 / BCRC 17464 / JCM 30415 / NCIMB 11848 / C-107).